The chain runs to 76 residues: Acyl carrier protein (76 aa).

A Carrier domain is found at 1 to 75 (MIFEKIKDLI…DIVFYITKNT (75 aa)). S35 carries the post-translational modification O-(pantetheine 4'-phosphoryl)serine.

It belongs to the acyl carrier protein (ACP) family. In terms of processing, 4'-phosphopantetheine is transferred from CoA to a specific serine of apo-ACP by AcpS. This modification is essential for activity because fatty acids are bound in thioester linkage to the sulfhydryl of the prosthetic group.

It is found in the cytoplasm. The protein operates within lipid metabolism; fatty acid biosynthesis. Functionally, carrier of the growing fatty acid chain in fatty acid biosynthesis. This is Acyl carrier protein from Aster yellows witches'-broom phytoplasma (strain AYWB).